The chain runs to 406 residues: MTDTVEDVELPYDDSASQQDKLEALEEQLSTLEEENEEMRDRLLDANAENNKYQQKLERLSHENKKLKQSPLFIATVQELTDEGAVIKQHGNNQEALTEVTDELRATLEPGSRVAVNNSLSVVRQLDDEADVRARVMEVDDSPDVGYEDIGGLDDQLREVRETVELPMKDPGLFETVGINPPSGVLLHGPPGTGKTLMAKAVASQTDASFIKMAGSELVHKFIGEGAKLVRDLFQVARDHEPAVVFIDEIDAIASKRTDSKTSGDAEVQRTMMQLLSEMDGFDERGDIRIIAATNRFDMLDRAILRPGRFDRLIEVPHPNVGGREKIFRIHTRAMNVADSVDFGELAADTGDLSGADVKAICTEAGMFAIRDDRTEVRMQDFQSAREKLDQDSEPAAATDVSRTFA.

Residues 1 to 12 (MTDTVEDVELPY) show a composition bias toward acidic residues. Residues 1-20 (MTDTVEDVELPYDDSASQQD) are disordered. A coiled-coil region spans residues 12 to 70 (YDDSASQQDKLEALEEQLSTLEEENEEMRDRLLDANAENNKYQQKLERLSHENKKLKQS). ATP contacts are provided by residues 192-197 (GTGKTL) and histidine 331. Residues 385 to 406 (AREKLDQDSEPAAATDVSRTFA) are disordered. The interval 404–406 (TFA) is docks into pockets in the proteasome alpha-ring to cause gate opening.

Belongs to the AAA ATPase family. Homohexamer. The hexameric complex has a two-ring architecture resembling a top hat that caps the 20S proteasome core at one or both ends. Upon ATP-binding, the C-terminus of PAN interacts with the alpha-rings of the proteasome core by binding to the intersubunit pockets.

Its subcellular location is the cytoplasm. Functionally, ATPase which is responsible for recognizing, binding, unfolding and translocation of substrate proteins into the archaeal 20S proteasome core particle. Is essential for opening the gate of the 20S proteasome via an interaction with its C-terminus, thereby allowing substrate entry and access to the site of proteolysis. Thus, the C-termini of the proteasomal ATPase function like a 'key in a lock' to induce gate opening and therefore regulate proteolysis. Unfolding activity requires energy from ATP hydrolysis, whereas ATP binding alone promotes ATPase-20S proteasome association which triggers gate opening, and supports translocation of unfolded substrates. The protein is Proteasome-activating nucleotidase 1 of Halobacterium salinarum (strain ATCC 700922 / JCM 11081 / NRC-1) (Halobacterium halobium).